The following is a 394-amino-acid chain: Protein TsgA homolog (394 aa).

Helical transmembrane passes span 11–31 (WISY…GMVM), 51–71 (FLNA…EIIP), 76–96 (LVFG…GHNL), 101–121 (ISMF…TFLI), 134–154 (LLFT…AAAI), 162–182 (WYWV…LTLC), 206–226 (MGVL…LGFI), 246–266 (QLVS…SFIL), 274–294 (IVTV…STNN), 302–322 (ILAL…LGSL), 334–354 (FILT…GPIV), and 363–383 (LATA…LGFF).

The protein belongs to the major facilitator superfamily. TsgA family.

It localises to the cell inner membrane. The protein is Protein TsgA homolog of Yersinia enterocolitica serotype O:8 / biotype 1B (strain NCTC 13174 / 8081).